We begin with the raw amino-acid sequence, 140 residues long: Large ribosomal subunit protein uL14 (140 aa).

Belongs to the universal ribosomal protein uL14 family. As to quaternary structure, part of the 50S ribosomal subunit. Forms a cluster with proteins L3 and L24e, part of which may contact the 16S rRNA in 2 intersubunit bridges.

Functionally, binds to 23S rRNA. Forms part of two intersubunit bridges in the 70S ribosome. This is Large ribosomal subunit protein uL14 from Nitrosopumilus maritimus (strain SCM1).